Reading from the N-terminus, the 202-residue chain is Small ribosomal subunit protein bS20c (202 aa).

Residues 1–79 (MATIVQCLSS…KPMRQLIVCE (79 aa)) constitute a chloroplast transit peptide. Positions 89–110 (SAAKRARQAEKRRVYNKSKKSE) are disordered.

This sequence belongs to the bacterial ribosomal protein bS20 family. As to quaternary structure, part of the 30S ribosomal subunit.

It is found in the plastid. It localises to the chloroplast. Functionally, binds directly to 16S ribosomal RNA. In Arabidopsis thaliana (Mouse-ear cress), this protein is Small ribosomal subunit protein bS20c (RPS20).